The sequence spans 582 residues: 15-cis-phytoene desaturase, chloroplastic/chromoplastic (582 aa).

A chloroplast and chromoplast-targeting transit peptide spans 1–110 (MPQIGLVSAV…FRSSPRPTKP (110 aa)). Residues 140-141 (EA), Lys148, 165-166 (HI), and Tyr171 each bind FAD. Residue Arg306 participates in substrate binding. The FAD site is built by Ile348 and Asp537. Ala545 provides a ligand contact to substrate. Met547 contacts FAD.

The protein belongs to the carotenoid/retinoid oxidoreductase family. Homotetramer. The cofactor is FAD.

It is found in the plastid. The protein localises to the chloroplast. Its subcellular location is the chromoplast. It localises to the membrane. It catalyses the reaction 2 a plastoquinone + 15-cis-phytoene = 9,9',15-tri-cis-zeta-carotene + 2 a plastoquinol. The protein operates within carotenoid biosynthesis; lycopene biosynthesis. With respect to regulation, inhibited by the herbicides metflurazon, difunone, fluridone and diflufenican. Functionally, converts phytoene into zeta-carotene via the intermediary of phytofluene by the symmetrical introduction of two double bonds at the C-11 and C-11' positions of phytoene with a concomitant isomerization of two neighboring double bonds at the C9 and C9' positions from trans to cis. The protein is 15-cis-phytoene desaturase, chloroplastic/chromoplastic (PDS) of Capsicum annuum (Capsicum pepper).